A 327-amino-acid polypeptide reads, in one-letter code: Ornithine carbamoyltransferase, mitochondrial (327 aa).

Carbamoyl phosphate contacts are provided by residues 63–66, Arg114, His141, and Gln144; that span reads STRT. Residues Asn172, Asp236, Ser240, and Met241 each coordinate L-ornithine. Catalysis depends on Cys276, which acts as the Proton acceptor. Carbamoyl phosphate is bound by residues 276–277 and Arg303; that span reads CL.

This sequence belongs to the aspartate/ornithine carbamoyltransferase superfamily. OTCase family. As to quaternary structure, interacts with trx2.

The protein localises to the mitochondrion matrix. It catalyses the reaction carbamoyl phosphate + L-ornithine = L-citrulline + phosphate + H(+). Its pathway is amino-acid biosynthesis; L-arginine biosynthesis; L-arginine from L-ornithine and carbamoyl phosphate: step 1/3. In terms of biological role, ornithine carbamoyltransferase involved in the synthesis of arginine from glutamate via ornithine and the urea cycle. The protein is Ornithine carbamoyltransferase, mitochondrial (arg3) of Schizosaccharomyces pombe (strain 972 / ATCC 24843) (Fission yeast).